Here is a 72-residue protein sequence, read N- to C-terminus: MAKEELLEMRGQVVELLPNAMFRVKLENDHEILGHTAGKMRKNRIRVLVGDEVLVELTPYDLTKGRITYRFK.

Residues 1-72 enclose the S1-like domain; sequence MAKEELLEMR…TKGRITYRFK (72 aa).

This sequence belongs to the IF-1 family. In terms of assembly, component of the 30S ribosomal translation pre-initiation complex which assembles on the 30S ribosome in the order IF-2 and IF-3, IF-1 and N-formylmethionyl-tRNA(fMet); mRNA recruitment can occur at any time during PIC assembly.

It is found in the cytoplasm. Its function is as follows. One of the essential components for the initiation of protein synthesis. Stabilizes the binding of IF-2 and IF-3 on the 30S subunit to which N-formylmethionyl-tRNA(fMet) subsequently binds. Helps modulate mRNA selection, yielding the 30S pre-initiation complex (PIC). Upon addition of the 50S ribosomal subunit IF-1, IF-2 and IF-3 are released leaving the mature 70S translation initiation complex. This Sphingopyxis alaskensis (strain DSM 13593 / LMG 18877 / RB2256) (Sphingomonas alaskensis) protein is Translation initiation factor IF-1.